Consider the following 245-residue polypeptide: tRNA pseudouridine synthase A (245 aa).

The active-site Nucleophile is Asp-52. Tyr-111 is a binding site for substrate.

Belongs to the tRNA pseudouridine synthase TruA family. As to quaternary structure, homodimer.

It catalyses the reaction uridine(38/39/40) in tRNA = pseudouridine(38/39/40) in tRNA. Formation of pseudouridine at positions 38, 39 and 40 in the anticodon stem and loop of transfer RNAs. This chain is tRNA pseudouridine synthase A, found in Rickettsia africae (strain ESF-5).